The chain runs to 336 residues: MTFRVAVIPGDGIGPELYEGSKRIIAKLIEKYNLDIDLIEVEAGDVALNKYGEALPRHTLDVIEKADMILKGPVGETAMDVVVKLRQMYDMYANIRPAKSLPNVQSKYPNVDLVIVRENTEDLYKGFEFVTSTGVTIAIKVTTEFASKRIVNVALNYALMRRRKVTCVHKANVMRVTDGLFASVCREILKGKVNFEEMYVDAAAANLVRDPTRFDVIVTSNVYGDILSDEASQIAGSLGLAPSANIGDRKSMFEPVHGAAFDIAGKGIANPTAFLLSVSMMLSRMYELSKENKYILASKSLENAIIETYKSGNKLTEDVGGSAKLKDMVDEIYKYM.

Arg-86, Arg-96, Arg-117, and Asp-201 together coordinate substrate. Mg(2+) contacts are provided by Asp-201, Asp-225, and Asp-229. 258-270 (GAAFDIAGKGIAN) contributes to the NAD(+) binding site.

The protein belongs to the isocitrate and isopropylmalate dehydrogenases family. As to quaternary structure, homotetramer. Mg(2+) serves as cofactor. The cofactor is Mn(2+).

It is found in the cytoplasm. The catalysed reaction is (2R,3S)-3-isopropylmalate + NAD(+) = 4-methyl-2-oxopentanoate + CO2 + NADH. Its pathway is amino-acid biosynthesis; L-leucine biosynthesis; L-leucine from 3-methyl-2-oxobutanoate: step 3/4. Catalyzes the oxidation of 3-carboxy-2-hydroxy-4-methylpentanoate (3-isopropylmalate) to 3-carboxy-4-methyl-2-oxopentanoate. The product decarboxylates to 4-methyl-2 oxopentanoate. The polypeptide is 3-isopropylmalate dehydrogenase (leuB) (Saccharolobus solfataricus (strain ATCC 35092 / DSM 1617 / JCM 11322 / P2) (Sulfolobus solfataricus)).